The following is a 120-amino-acid chain: SAGA-associated factor 11 (120 aa).

Over residues 40–60 the composition is skewed to low complexity; it reads SLLNSSNSNTNSNTNGTIASN. The disordered stretch occupies residues 40–82; sequence SLLNSSNSNTNSNTNGTIASNGGNGTTSDENNEIENSTIQDKS. The segment at 93–114 adopts an SGF11-type zinc-finger fold; it reads FRCLNCGRNIAGGRFASHISKC.

Belongs to the SGF11 family. As to quaternary structure, component of the 1.8 MDa SAGA transcription coactivator-HAT complex. SAGA is built of 5 distinct domains with specialized functions. Within the SAGA complex, SUS1, SGF11, SGF73 and UBP8 form an additional subcomplex of SAGA called the DUB module (deubiquitination module). Interacts directly with SGF73, SUS1 and UBP8.

It localises to the nucleus. Its function is as follows. Functions as a component of the transcription regulatory histone acetylation (HAT) complex SAGA. At the promoters, SAGA is required for recruitment of the basal transcription machinery. It influences RNA polymerase II transcriptional activity through different activities such as TBP interaction and promoter selectivity, interaction with transcription activators, and chromatin modification through histone acetylation and deubiquitination. SAGA acetylates nucleosomal histone H3 to some extent (to form H3K9ac, H3K14ac, H3K18ac and H3K23ac). SAGA interacts with DNA via upstream activating sequences (UASs). Involved in transcriptional regulation of a subset of SAGA-regulated genes. Within the SAGA complex, participates in a subcomplex, that specifically deubiquitinates histones H2B. The chain is SAGA-associated factor 11 from Candida albicans (strain SC5314 / ATCC MYA-2876) (Yeast).